Here is a 198-residue protein sequence, read N- to C-terminus: MARCKS-related protein (198 aa).

The disordered stretch occupies residues 1-198 (MGSQSSKAPR…DPAPASEQNE (198 aa)). A lipid anchor (N-myristoyl glycine) is attached at Gly2. Thr14 is subject to Phosphothreonine. Phosphoserine occurs at positions 22, 36, 41, and 48. Over residues 53 to 62 (GTEEAAGATG) the composition is skewed to low complexity. The residue at position 71 (Ser71) is a Phosphoserine. Residues 76–85 (AKGEVPPKET) are compositionally biased toward basic and acidic residues. Thr85 is modified (phosphothreonine). A compositionally biased stretch (basic residues) spans 86 to 98 (PKKKKKFSFKKPF). The tract at residues 87–110 (KKKKKFSFKKPFKLSGLSFKRNRK) is effector domain involved in lipid-binding and calmodulin-binding. Residues Ser93, Ser101, and Ser104 each carry the phosphoserine; by PKC modification. Residue Ser119 is modified to Phosphoserine. Ser120 carries the post-translational modification Phosphoserine; by MAPK8. Ser132 is subject to Phosphoserine. Thr148 bears the Phosphothreonine; by MAPK8 mark. Phosphoserine occurs at positions 151 and 162. The span at 156–167 (AKGAEASAAAKG) shows a compositional bias: low complexity. Thr170 carries the phosphothreonine modification. Thr182 is subject to Phosphothreonine; by MAPK8.

It belongs to the MARCKS family. Binds to filamentous actin (F-actin), but not to monomeric G-actin, independently of its phosphorylation status. Interacts with calmodulin. Phosphorylated. Phosphorylation at Ser-120 and Thr-182 is non-redundantly catalyzed by MAPK8 in vivo. Phosphorylation at Thr-148 is preferentially catalyzed by MAPK8 in vivo, but this modification can also be catalyzed by other kinases in the absence of MAPK8. May be phosphorylated by protein kinase C, which disrupts the interaction with calmodulin.

It is found in the cytoplasm. The protein localises to the cytoskeleton. The protein resides in the cell membrane. Functionally, controls cell movement by regulating actin cytoskeleton homeostasis and filopodium and lamellipodium formation. When unphosphorylated, induces cell migration. When phosphorylated by MAPK8, induces actin bundles formation and stabilization, thereby reducing actin plasticity, hence restricting cell movement, including neuronal migration. May be involved in coupling the protein kinase C and calmodulin signal transduction systems. The polypeptide is MARCKS-related protein (MARCKSL1) (Bos taurus (Bovine)).